A 145-amino-acid polypeptide reads, in one-letter code: Large ribosomal subunit protein uL16 (145 aa).

The protein belongs to the universal ribosomal protein uL16 family. As to quaternary structure, part of the 50S ribosomal subunit.

In terms of biological role, binds 23S rRNA and is also seen to make contacts with the A and possibly P site tRNAs. The protein is Large ribosomal subunit protein uL16 of Desulfitobacterium hafniense (strain DSM 10664 / DCB-2).